Reading from the N-terminus, the 83-residue chain is High-potential iron-sulfur protein (83 aa).

[4Fe-4S] cluster-binding residues include cysteine 43, cysteine 46, cysteine 61, and cysteine 75.

This sequence belongs to the high-potential iron-sulfur protein (HiPIP) family. In terms of assembly, homodimer.

It is found in the periplasm. Its function is as follows. Specific class of high-redox-potential 4Fe-4S ferredoxins. Functions in anaerobic electron transport in most purple and in some other photosynthetic bacteria and in at least one genus (Paracoccus) of halophilic, denitrifying bacteria. The sequence is that of High-potential iron-sulfur protein from Thiocystis violacea.